The chain runs to 260 residues: Uridylate kinase (260 aa).

Position 29 to 32 (29 to 32 (KLSG)) interacts with ATP. The involved in allosteric activation by GTP stretch occupies residues 37-42 (GDLGYG). Gly71 contacts UMP. Residues Gly72 and Arg76 each coordinate ATP. Residues Asp91 and 152-159 (SGNPFFTT) contribute to the UMP site. Residues Thr179, Tyr185, and Asp188 each contribute to the ATP site.

Belongs to the UMP kinase family. As to quaternary structure, homohexamer.

The protein resides in the cytoplasm. The enzyme catalyses UMP + ATP = UDP + ADP. The protein operates within pyrimidine metabolism; CTP biosynthesis via de novo pathway; UDP from UMP (UMPK route): step 1/1. With respect to regulation, allosterically activated by GTP. Inhibited by UTP. In terms of biological role, catalyzes the reversible phosphorylation of UMP to UDP. The protein is Uridylate kinase of Synechocystis sp. (strain ATCC 27184 / PCC 6803 / Kazusa).